Consider the following 384-residue polypeptide: MAP kinase-activated protein kinase 3 (384 aa).

M1 bears the N-acetylmethionine mark. The disordered stretch occupies residues 1 to 33; sequence MDGETAGEKGSLVPPPGALGGSALGGAPAPGVR. The Protein kinase domain maps to 46–306; it reads QLSKQVLGLG…IMQFMNHPWI (261 aa). ATP is bound by residues 52–60 and K75; that span reads LGLGVNGKV. Residue D168 is the Proton acceptor of the active site. Residue T203 is modified to Phosphothreonine; by MAPK14. S253 bears the Phosphoserine; by MAPK14 mark. S309 is subject to Phosphoserine; by autocatalysis. An autoinhibitory helix region spans residues 309-345; sequence SMVVPQTPLYTARVLQEDKDHWDDVKEEMTSALATMR. Phosphothreonine; by MAPK14 is present on T315. A Nuclear export signal (NES) motif is present at residues 337 to 346; sequence MTSALATMRV. A p38 MAPK-binding site region spans residues 347–371; sequence DYDQVKIKDLKTSNNRLLNKRRKKQ. Short sequence motifs (bipartite nuclear localization signal) lie at residues 352–355 and 366–370; these read KIKD and KRRKK. Residues 359–384 form a disordered region; the sequence is SNNRLLNKRRKKQAGSSSASQGCNNQ. Positions 372 to 384 are enriched in polar residues; the sequence is AGSSSASQGCNNQ.

This sequence belongs to the protein kinase superfamily. CAMK Ser/Thr protein kinase family. Heterodimer with p38-alpha/MAPK14. The heterodimer with p38-alpha/MAPK14 forms a stable complex: molecules are positioned 'face to face' so that the ATP-binding sites of both kinases are at the heterodimer interface. Interacts with TCF3 and with polycomb proteins, such as PCH2 and BMI1/PCGF4. Post-translationally, phosphorylated and activated by MAPK1/ERK2 and MAPK3/ERK1. Phosphorylated and activated by MAP kinase p38-alpha/MAPK14 at Thr-201, Ser-251 and Thr-313. Isoform 3 is degraded following phosphorylation at Thr-203. As to expression, ubiquitously expressed (at protein level). Isoform 3 is expressed in skeletal muscles and heart.

The protein resides in the nucleus. Its subcellular location is the cytoplasm. The catalysed reaction is L-seryl-[protein] + ATP = O-phospho-L-seryl-[protein] + ADP + H(+). It carries out the reaction L-threonyl-[protein] + ATP = O-phospho-L-threonyl-[protein] + ADP + H(+). With respect to regulation, activated following phosphorylation by p38-alpha/MAPK14 following various stresses. Inhibited by ligand 5B (2'-[2-(1,3-benzodioxol-5-yl)pyrimidin-4-yl]-5',6'-dihydrospiro[piperidine-4,7'-pyrrolo[3,2-c]pyridin]- 4'(1'h)-one) and ligand P4O (2-[2-(2-fluorophenyl)pyridin-4-yl]-1,5,6,7-tetrahydro- 4h-pyrrolo[3,2-c]pyridin-4-one), 2 ATP-competitive inhibitors. In terms of biological role, stress-activated serine/threonine-protein kinase involved in cytokines production, endocytosis, cell migration, chromatin remodeling and transcriptional regulation. Following stress, it is phosphorylated and activated by MAP kinase p38-alpha/MAPK14, leading to phosphorylation of substrates. Phosphorylates serine in the peptide sequence, Hyd-X-R-X(2)-S, where Hyd is a large hydrophobic residue. MAPKAPK2 and MAPKAPK3, share the same function and substrate specificity, but MAPKAPK3 kinase activity and level in protein expression are lower compared to MAPKAPK2. Phosphorylates HSP27/HSPB1, KRT18, KRT20, RCSD1, RPS6KA3, TAB3 and TTP/ZFP36. Mediates phosphorylation of HSP27/HSPB1 in response to stress, leading to dissociate HSP27/HSPB1 from large small heat-shock protein (sHsps) oligomers and impair their chaperone activities and ability to protect against oxidative stress effectively. Involved in inflammatory response by regulating tumor necrosis factor (TNF) and IL6 production post-transcriptionally: acts by phosphorylating AU-rich elements (AREs)-binding proteins, such as TTP/ZFP36, leading to regulate the stability and translation of TNF and IL6 mRNAs. Phosphorylation of TTP/ZFP36, a major post-transcriptional regulator of TNF, promotes its binding to 14-3-3 proteins and reduces its ARE mRNA affinity leading to inhibition of dependent degradation of ARE-containing transcript. Involved in toll-like receptor signaling pathway (TLR) in dendritic cells: required for acute TLR-induced macropinocytosis by phosphorylating and activating RPS6KA3. Also acts as a modulator of Polycomb-mediated repression. This is MAP kinase-activated protein kinase 3 (Mapkapk3) from Mus musculus (Mouse).